The chain runs to 251 residues: Mediator of RNA polymerase II transcription subunit 7 (251 aa).

Residues 1–38 form a disordered region; sequence MLPGFGAQTVSPFPNPPEYASAYTSDRINNGSAPPPPH. The segment covering 22–32 has biased composition (polar residues); sequence AYTSDRINNGS.

This sequence belongs to the Mediator complex subunit 7 family. In terms of assembly, component of the Mediator complex. Interacts with mdt-10 and mdt-21. Interacts with RNA polymerase II.

It is found in the nucleus. In terms of biological role, component of the Mediator complex, a coactivator involved in the regulated transcription of nearly all RNA polymerase II-dependent genes. Mediator functions as a bridge to convey information from gene-specific regulatory proteins to the basal RNA polymerase II transcription machinery. Mediator is recruited to promoters by direct interactions with regulatory proteins and serves as a scaffold for the assembly of a functional preinitiation complex with RNA polymerase II and the general transcription factors. Required for germ cell development and gonadal growth. The polypeptide is Mediator of RNA polymerase II transcription subunit 7 (let-49) (Caenorhabditis elegans).